We begin with the raw amino-acid sequence, 1085 residues long: Voltage-dependent calcium channel subunit alpha-2/delta-3 (1085 aa).

Residues methionine 1 to serine 33 form the signal peptide. The Extracellular segment spans residues glutamate 34 to glycine 1062. N-linked (GlcNAc...) asparagine glycosylation occurs at asparagine 166. Residues aspartate 256–leucine 438 enclose the VWFA domain. Aspartate 262, serine 264, and serine 266 together coordinate a divalent metal cation. The MIDAS-like motif signature appears at aspartate 262–serine 266. N-linked (GlcNAc...) asparagine glycosylation occurs at asparagine 309. Cysteines 412 and 1049 form a disulfide. A Cache domain is found at tryptophan 452–arginine 543. 2 N-linked (GlcNAc...) asparagine glycosylation sites follow: asparagine 547 and asparagine 626. At tyrosine 918 the chain carries Phosphotyrosine. Residues glycine 1063–phenylalanine 1083 traverse the membrane as a helical segment. The Cytoplasmic portion of the chain corresponds to serine 1084 to arginine 1085.

This sequence belongs to the calcium channel subunit alpha-2/delta family. In terms of assembly, dimer formed of alpha-2-2 and delta-2 chains; disulfide-linked. Voltage-dependent calcium channels are multisubunit complexes, consisting of alpha-1 (CACNA1), alpha-2 (CACNA2D), beta (CACNB) and delta (CACNA2D) subunits in a 1:1:1:1 ratio. N-glycosylated. Post-translationally, may be proteolytically processed into subunits alpha-2-3 and delta-3 that are disulfide-linked. It is however unclear whether such cleavage really takes place in vivo and has a functional role. In terms of tissue distribution, in heart, it is expressed in atrium but not in ventricle.

The protein resides in the membrane. In terms of biological role, the alpha-2/delta subunit of voltage-dependent calcium channels regulates calcium current density and activation/inactivation kinetics of the calcium channel. Acts as a regulatory subunit for P/Q-type calcium channel (CACNA1A), N-type (CACNA1B), L-type (CACNA1C OR CACNA1D) but not T-type (CACNA1G). This chain is Voltage-dependent calcium channel subunit alpha-2/delta-3 (Cacna2d3), found in Rattus norvegicus (Rat).